Reading from the N-terminus, the 107-residue chain is High mobility group protein HMG-I/HMG-Y (107 aa).

The segment covering 1–13 (MSESVSKSSQPLA) has biased composition (polar residues). Residues 1–107 (MSESVSKSSQ…ISQESSEEEQ (107 aa)) form a disordered region. An N-acetylserine modification is found at S2. K7 carries the N6-acetyllysine modification. S8 carries the post-translational modification ADP-ribosylserine. S9 is modified (ADP-ribosylserine; alternate). A Phosphoserine; alternate modification is found at S9. K15 is subject to N6-acetyllysine; alternate. K15 participates in a covalent cross-link: Glycyl lysine isopeptide (Lys-Gly) (interchain with G-Cter in SUMO2); alternate. The segment covering 15 to 24 (KQEKDGTEKR) has biased composition (basic and acidic residues). Residues 21-31 (TEKRGRGRPRK) constitute a DNA-binding region (a.T hook 1). R26 is modified (asymmetric dimethylarginine; alternate). R26 bears the Omega-N-methylarginine; alternate mark. R26 is modified (symmetric dimethylarginine; alternate). S36 carries the post-translational modification Phosphoserine; by HIPK2 and CDC2. At T39 the chain carries Phosphothreonine. Phosphoserine occurs at positions 44 and 49. A Phosphothreonine; by HIPK2 and CDC2 modification is found at T53. 2 DNA-binding regions (a.T hook) span residues 53–63 (TPKRPRGRPKG) and 78–89 (TPGRKPRGRPKK). Residues 53 to 77 (TPKRPRGRPKGSKNKGTAKTRKVTT) are interaction with HIPK2. A compositionally biased stretch (basic residues) spans 55 to 74 (KRPRGRPKGSKNKGTAKTRK). Asymmetric dimethylarginine; by PRMT6; alternate is present on residues R58 and R60. R58 and R60 each carry omega-N-methylarginine; by PRMT6; alternate. T78 is modified (phosphothreonine; by HIPK2 and CDC2). Positions 93–107 (EEEEGISQESSEEEQ) are enriched in acidic residues. Phosphoserine occurs at positions 99, 102, and 103.

It belongs to the HMGA family. Interacts with HIPK2. Post-translationally, isoforms HMG-I and HMG-Y can be phosphorylated by HIPK2. Phosphorylation may modulate DNA-binding affinity. In terms of processing, methylation at Arg-58 is mutually exclusive with methylation at Arg-60.

Its subcellular location is the nucleus. The protein resides in the chromosome. In terms of biological role, HMG-I/Y bind preferentially to the minor groove of A+T rich regions in double-stranded DNA. It is suggested that these proteins could function in nucleosome phasing and in the 3'-end processing of mRNA transcripts. They are also involved in the transcription regulation of genes containing, or in close proximity to A+T-rich regions. This is High mobility group protein HMG-I/HMG-Y (Hmga1) from Rattus norvegicus (Rat).